The following is a 122-amino-acid chain: Large ribosomal subunit protein uL18 (122 aa).

This sequence belongs to the universal ribosomal protein uL18 family. In terms of assembly, part of the 50S ribosomal subunit; part of the 5S rRNA/L5/L18/L25 subcomplex. Contacts the 5S and 23S rRNAs.

This is one of the proteins that bind and probably mediate the attachment of the 5S RNA into the large ribosomal subunit, where it forms part of the central protuberance. This chain is Large ribosomal subunit protein uL18, found in Trichlorobacter lovleyi (strain ATCC BAA-1151 / DSM 17278 / SZ) (Geobacter lovleyi).